A 965-amino-acid chain; its full sequence is Glycine dehydrogenase (decarboxylating) (965 aa).

At K711 the chain carries N6-(pyridoxal phosphate)lysine.

It belongs to the GcvP family. The glycine cleavage system is composed of four proteins: P, T, L and H. It depends on pyridoxal 5'-phosphate as a cofactor.

The catalysed reaction is N(6)-[(R)-lipoyl]-L-lysyl-[glycine-cleavage complex H protein] + glycine + H(+) = N(6)-[(R)-S(8)-aminomethyldihydrolipoyl]-L-lysyl-[glycine-cleavage complex H protein] + CO2. Its function is as follows. The glycine cleavage system catalyzes the degradation of glycine. The P protein binds the alpha-amino group of glycine through its pyridoxal phosphate cofactor; CO(2) is released and the remaining methylamine moiety is then transferred to the lipoamide cofactor of the H protein. The sequence is that of Glycine dehydrogenase (decarboxylating) from Psychrobacter cryohalolentis (strain ATCC BAA-1226 / DSM 17306 / VKM B-2378 / K5).